A 188-amino-acid chain; its full sequence is MGVDIRHNKDRKVRRKEPKSQDIYLRLLVKLYRFLARRTNSTFNQVVLKRLFMSRTNRPPLSLSRMIRKMKLPGRENKTAVVVGTVTDDVRILEVPKLKVCALRVSSRARSRILKAGGKILTFDQLALESPKGRGTVLLSGPRKGREVYRHFGKAPGTPHSHTKPYVRSKGRKFERARGRRASRGYKN.

Lys119 participates in a covalent cross-link: Glycyl lysine isopeptide (Lys-Gly) (interchain with G-Cter in SUMO2). Position 130 is a phosphoserine (Ser130). Positions 150-188 (RHFGKAPGTPHSHTKPYVRSKGRKFERARGRRASRGYKN) are disordered. Thr158 is subject to Phosphothreonine. 2 stretches are compositionally biased toward basic residues: residues 161–171 (SHTKPYVRSKG) and 178–188 (RGRRASRGYKN). A Glycyl lysine isopeptide (Lys-Gly) (interchain with G-Cter in SUMO2) cross-link involves residue Lys164.

It belongs to the eukaryotic ribosomal protein eL18 family. As to quaternary structure, component of the large ribosomal subunit.

The protein resides in the cytoplasm. It localises to the cytosol. The protein localises to the rough endoplasmic reticulum. In terms of biological role, component of the large ribosomal subunit. The ribosome is a large ribonucleoprotein complex responsible for the synthesis of proteins in the cell. The protein is Large ribosomal subunit protein eL18 (Rpl18) of Mus musculus (Mouse).